The chain runs to 102 residues: Glutaredoxin-C14 (102 aa).

The Glutaredoxin domain maps to M1–H101. The cysteines at positions 21 and 24 are disulfide-linked.

The protein belongs to the glutaredoxin family. CC-type subfamily.

It is found in the cytoplasm. Functionally, has a glutathione-disulfide oxidoreductase activity in the presence of NADPH and glutathione reductase. Reduces low molecular weight disulfides and proteins. The protein is Glutaredoxin-C14 (GRXC14) of Arabidopsis thaliana (Mouse-ear cress).